A 441-amino-acid polypeptide reads, in one-letter code: Divalent metal cation transporter MntH (441 aa).

A run of 11 helical transmembrane segments spans residues 41–61, 74–94, 116–136, 141–161, 183–203, 223–243, 271–291, 311–331, 360–380, 381–401, and 419–439; these read TGIA…IGYM, AAYG…AMLF, HFPA…AMAT, FLGG…AGMI, AAIA…LMIA, AALT…TLYL, VVVA…MAAS, IPVL…TSGV, AVTI…TRAM, VASQ…LLIL, and IVAG…VWAA.

Belongs to the NRAMP family.

The protein localises to the cell inner membrane. Functionally, h(+)-stimulated, divalent metal cation uptake system. The chain is Divalent metal cation transporter MntH from Burkholderia ambifaria (strain ATCC BAA-244 / DSM 16087 / CCUG 44356 / LMG 19182 / AMMD) (Burkholderia cepacia (strain AMMD)).